We begin with the raw amino-acid sequence, 475 residues long: Bystin (475 aa).

Composition is skewed to basic residues over residues 1-12 and 29-41; these read MGKDVKKVHKLR and KPHK…RKKK. Disordered stretches follow at residues 1–57 and 106–149; these read MGKD…ESVI and DFID…QFGV. Acidic residues-rich tracts occupy residues 45 to 54 and 107 to 119; these read ENDTGIDETE and FIDD…DADQ.

It belongs to the bystin family.

The protein localises to the nucleus. Its subcellular location is the nucleolus. Its function is as follows. Required for processing of 20S pre-rRNA precursor and biogenesis of 40S ribosomal subunits. This is Bystin (bysl) from Dictyostelium discoideum (Social amoeba).